The sequence spans 921 residues: GPI ethanolamine phosphate transferase 1 (921 aa).

The chain crosses the membrane as a helical span at residues 37-57 (PGHVALIAGLYEDVSAVTTGW). N-linked (GlcNAc...) asparagine glycosylation is found at Asn69 and Asn132. 10 consecutive transmembrane segments (helical) span residues 386–406 (ALIT…VIDL), 418–438 (TLIG…SFAI), 441–461 (SPLT…EVYA), 483–503 (FVSL…LALG), 509–529 (ILTI…FSFL), 533–553 (MALS…TLLP), 561–581 (VNMI…YLIL), 606–626 (LVGI…SSAL), 640–660 (VMGW…RAKP), and 679–699 (FVIL…AVLV). The disordered stretch occupies residues 715–737 (SANGAARSAPSPAKPHNLETSQT). Transmembrane regions (helical) follow at residues 752–772 (VALF…NVAS), 795–815 (AMLI…LGIL), 825–845 (ALFM…FWVV), and 862–882 (VIAS…AMFI).

This sequence belongs to the PIGG/PIGN/PIGO family. PIGN subfamily.

It localises to the endoplasmic reticulum membrane. The protein operates within glycolipid biosynthesis; glycosylphosphatidylinositol-anchor biosynthesis. Functionally, ethanolamine phosphate transferase involved in glycosylphosphatidylinositol-anchor biosynthesis. Transfers ethanolamine phosphate to the first alpha-1,4-linked mannose of the glycosylphosphatidylinositol precursor of GPI-anchor. This Chaetomium globosum (strain ATCC 6205 / CBS 148.51 / DSM 1962 / NBRC 6347 / NRRL 1970) (Soil fungus) protein is GPI ethanolamine phosphate transferase 1 (MCD4).